A 441-amino-acid chain; its full sequence is ATP-dependent protease ATPase subunit HslU (441 aa).

Residues Ile-18, 60–65 (GVGKTE), Asp-254, Glu-319, and Arg-391 each bind ATP.

It belongs to the ClpX chaperone family. HslU subfamily. As to quaternary structure, a double ring-shaped homohexamer of HslV is capped on each side by a ring-shaped HslU homohexamer. The assembly of the HslU/HslV complex is dependent on binding of ATP.

It localises to the cytoplasm. In terms of biological role, ATPase subunit of a proteasome-like degradation complex; this subunit has chaperone activity. The binding of ATP and its subsequent hydrolysis by HslU are essential for unfolding of protein substrates subsequently hydrolyzed by HslV. HslU recognizes the N-terminal part of its protein substrates and unfolds these before they are guided to HslV for hydrolysis. This is ATP-dependent protease ATPase subunit HslU from Shewanella frigidimarina (strain NCIMB 400).